Here is a 155-residue protein sequence, read N- to C-terminus: Small ribosomal subunit protein uS7c (155 aa).

It belongs to the universal ribosomal protein uS7 family. As to quaternary structure, part of the 30S ribosomal subunit.

It is found in the plastid. The protein resides in the chloroplast. In terms of biological role, one of the primary rRNA binding proteins, it binds directly to 16S rRNA where it nucleates assembly of the head domain of the 30S subunit. The chain is Small ribosomal subunit protein uS7c (rps7) from Ginkgo biloba (Ginkgo).